The primary structure comprises 357 residues: UDP-N-acetylglucosamine--N-acetylmuramyl-(pentapeptide) pyrophosphoryl-undecaprenol N-acetylglucosamine transferase (357 aa).

Residues 15–17, Asn-124, Arg-165, Ser-194, and Gln-288 each bind UDP-N-acetyl-alpha-D-glucosamine; that span reads TGG.

Belongs to the glycosyltransferase 28 family. MurG subfamily.

It localises to the cell inner membrane. It catalyses the reaction di-trans,octa-cis-undecaprenyl diphospho-N-acetyl-alpha-D-muramoyl-L-alanyl-D-glutamyl-meso-2,6-diaminopimeloyl-D-alanyl-D-alanine + UDP-N-acetyl-alpha-D-glucosamine = di-trans,octa-cis-undecaprenyl diphospho-[N-acetyl-alpha-D-glucosaminyl-(1-&gt;4)]-N-acetyl-alpha-D-muramoyl-L-alanyl-D-glutamyl-meso-2,6-diaminopimeloyl-D-alanyl-D-alanine + UDP + H(+). It participates in cell wall biogenesis; peptidoglycan biosynthesis. Functionally, cell wall formation. Catalyzes the transfer of a GlcNAc subunit on undecaprenyl-pyrophosphoryl-MurNAc-pentapeptide (lipid intermediate I) to form undecaprenyl-pyrophosphoryl-MurNAc-(pentapeptide)GlcNAc (lipid intermediate II). This chain is UDP-N-acetylglucosamine--N-acetylmuramyl-(pentapeptide) pyrophosphoryl-undecaprenol N-acetylglucosamine transferase, found in Nostoc punctiforme (strain ATCC 29133 / PCC 73102).